Here is a 632-residue protein sequence, read N- to C-terminus: Thioredoxin domain-containing protein C959.05c (632 aa).

A signal peptide spans 1-22 (MKLFLYHFTFIVYYFIISFSYA). N-linked (GlcNAc...) asparagine glycosylation is found at Asn35, Asn41, and Asn140. One can recognise a Thioredoxin domain in the interval 153–284 (SDSSSTDPAF…LLSYSNQVAS (132 aa)). Residues Cys209 and Cys212 are joined by a disulfide bond. Asn557 carries an N-linked (GlcNAc...) asparagine glycan. The helical transmembrane segment at 583-603 (LIVFNLLIALLILSILTIISA) threads the bilayer.

The protein belongs to the protein disulfide isomerase family.

It is found in the endoplasmic reticulum membrane. It carries out the reaction Catalyzes the rearrangement of -S-S- bonds in proteins.. In terms of biological role, acts as a membrane-bound chaperone in endoplasmic reticulum quality control. Probably facilitates presentation of substrate to membrane-bound components of the degradation machinery. The protein is Thioredoxin domain-containing protein C959.05c of Schizosaccharomyces pombe (strain 972 / ATCC 24843) (Fission yeast).